Here is a 154-residue protein sequence, read N- to C-terminus: MYYYLITLAVIALDQLTKWIVVQNMEIGQKIEVIPGFLYWTSYRNDGAAWSILEGHMWFFYLITVVVIGIIIYIMQKYAKGKRLFSISLAFILGGAIGNFIDRVLHQEVVDFVQTVWGNYYFPIFNVADASLSVGVVLMLVYVFVDDRKTKGIK.

The next 2 helical transmembrane spans lie at 55-75 (GHMW…IYIM) and 84-104 (LFSI…IDRV). Catalysis depends on residues Asp-111 and Asp-129. Residues 124-144 (IFNVADASLSVGVVLMLVYVF) form a helical membrane-spanning segment.

The protein belongs to the peptidase A8 family.

Its subcellular location is the cell membrane. The catalysed reaction is Release of signal peptides from bacterial membrane prolipoproteins. Hydrolyzes -Xaa-Yaa-Zaa-|-(S,diacylglyceryl)Cys-, in which Xaa is hydrophobic (preferably Leu), and Yaa (Ala or Ser) and Zaa (Gly or Ala) have small, neutral side chains.. It participates in protein modification; lipoprotein biosynthesis (signal peptide cleavage). In terms of biological role, this protein specifically catalyzes the removal of signal peptides from prolipoproteins. This Listeria monocytogenes serovar 1/2a (strain ATCC BAA-679 / EGD-e) protein is Lipoprotein signal peptidase.